Reading from the N-terminus, the 410-residue chain is Adenosine receptor A2a (410 aa).

Residues 1–4 (MGSS) are Extracellular-facing. A helical membrane pass occupies residues 5 to 29 (VYITVELAIAVLAILGNVLVCWAVW). Topologically, residues 30 to 39 (INSNLQNVTN) are cytoplasmic. Residues 40–63 (FFVVSLAAADIAVGVLAIPFAITI) form a helical membrane-spanning segment. Topologically, residues 64–74 (STGFCAACHGC) are extracellular. 3 cysteine pairs are disulfide-bonded: C68–C154, C71–C143, and C74–C161. A helical membrane pass occupies residues 75 to 97 (LFFACFVLVLTQSSIFSLLAIAI). Over 98–117 (DRYIAIRIPLRYNGLVTGVR) the chain is Cytoplasmic. The chain crosses the membrane as a helical span at residues 118-140 (AKGIIAICWVLSFAIGLTPMLGW). Residues 141–168 (NNCSQKDGNSTKTCGEGRVTCLFEDVVP) are Extracellular-facing. N-linked (GlcNAc...) asparagine glycans are attached at residues N142 and N149. E164 contacts adenosine. The helical transmembrane segment at 169 to 193 (MNYMVYYNFFAFVLLPLLLMLAIYL) threads the bilayer. The Cytoplasmic segment spans residues 194-229 (RIFLAARRQLKQMESQPLPGERTRSTLQKEVHAAKS). The helical transmembrane segment at 230–253 (LAIIVGLFALCWLPLHIINCFTFF) threads the bilayer. Adenosine is bound at residue N248. Residues C254 and C257 are joined by a disulfide bond. Residues 254–261 (CSTCRHAP) lie on the Extracellular side of the membrane. The helical transmembrane segment at 262–285 (PWLMYLAIILSHSNSVVNPFIYAY) threads the bilayer. The adenosine site is built by S272 and H273. Over 286-410 (RIREFRQTFR…SSWSSEFAPS (125 aa)) the chain is Cytoplasmic. The interaction with GAS2L2 stretch occupies residues 322–410 (HSTEGEQVSL…SSWSSEFAPS (89 aa)). The tract at residues 344–410 (GSATHSGRRP…SSWSSEFAPS (67 aa)) is disordered. Residues 371–388 (RDVELPTQERQEGQEHPG) are compositionally biased toward basic and acidic residues. Residues 401–410 (SSWSSEFAPS) show a composition bias toward polar residues.

The protein belongs to the G-protein coupled receptor 1 family. As to quaternary structure, interacts (via cytoplasmic C-terminal domain) with USP4; the interaction is direct. May interact with DRD4. Interacts with NECAB2. Interacts (via cytoplasmic C-terminal domain) with GAS2L2; interaction enhances receptor-mediated adenylyl cyclase activity. Ubiquitinated. Deubiquitinated by USP4; leading to stabilization and expression at the cell surface. In terms of tissue distribution, expressed in striatal neurons (at protein level).

The protein localises to the cell membrane. Its function is as follows. Receptor for adenosine. The activity of this receptor is mediated by G proteins which activate adenylyl cyclase. The chain is Adenosine receptor A2a (Adora2a) from Rattus norvegicus (Rat).